Consider the following 225-residue polypeptide: Ribosomal RNA small subunit methyltransferase G (225 aa).

Residues glycine 62, alanine 113–glutamate 114, and lysine 130 contribute to the S-adenosyl-L-methionine site.

This sequence belongs to the methyltransferase superfamily. RNA methyltransferase RsmG family.

Its subcellular location is the cytoplasm. Its function is as follows. Specifically methylates the N7 position of a guanine in 16S rRNA. This Petrotoga mobilis (strain DSM 10674 / SJ95) protein is Ribosomal RNA small subunit methyltransferase G.